Reading from the N-terminus, the 125-residue chain is Large ribosomal subunit protein eL8 (125 aa).

It belongs to the eukaryotic ribosomal protein eL8 family. In terms of assembly, part of the 50S ribosomal subunit. Probably part of the RNase P complex.

It is found in the cytoplasm. Multifunctional RNA-binding protein that recognizes the K-turn motif in ribosomal RNA, the RNA component of RNase P, box H/ACA, box C/D and box C'/D' sRNAs. The sequence is that of Large ribosomal subunit protein eL8 from Metallosphaera sedula (strain ATCC 51363 / DSM 5348 / JCM 9185 / NBRC 15509 / TH2).